We begin with the raw amino-acid sequence, 334 residues long: TPR repeat-containing protein MJ0798 (334 aa).

TPR repeat units follow at residues 102–135, 137–168, 169–202, 204–235, 236–269, 273–306, and 308–333; these read WKLWKNLGDKAYLWKAYYEALFCYNKALELNQNT, LLCKKGYALLKLYKRDLAIKYFEKASEKDRNN, YKALFGLGKSYYLMSDNKNSIKYFEKVLELNPND, EALEYLGELYYEEDCEKAINYFKKALELKPDD, IDLILKVAFTYFKLKKYKHALKYFEKALKLNPNV, EQIYESMGRIYIYLGEDEKAIECFEKLKEINLYH, and EIYEIIALTYEEVGNIEKAKEFYKKL.

In Methanocaldococcus jannaschii (strain ATCC 43067 / DSM 2661 / JAL-1 / JCM 10045 / NBRC 100440) (Methanococcus jannaschii), this protein is TPR repeat-containing protein MJ0798.